A 95-amino-acid chain; its full sequence is UPF0213 protein YPA_2977 (95 aa).

The region spanning 4-79 (SLWHLYLLRT…KQLSKQQKEK (76 aa)) is the GIY-YIG domain.

The protein belongs to the UPF0213 family.

The protein is UPF0213 protein YPA_2977 of Yersinia pestis bv. Antiqua (strain Antiqua).